Here is a 389-residue protein sequence, read N- to C-terminus: Large envelope protein (389 aa).

At Met-1 the chain carries N-acetylmethionine. Gly-2 carries the N-myristoyl glycine; by host lipid modification. The tract at residues 2 to 108 is pre-S1; that stretch reads GQNLSTSNPL…PPLRNTHPQA (107 aa). Residues 2–163 are pre-S; sequence GQNLSTSNPL…FSRIGDPALN (162 aa). The Virion surface; in external conformation segment spans residues 2–170; the sequence is GQNLSTSNPL…ALNMENITSG (169 aa). Residues 2–242 lie on the Intravirion; in internal conformation side of the membrane; it reads GQNLSTSNPL…PGYRWMCLRR (241 aa). An O-linked (GalNAc...) threonine glycan is attached at Asn-37. The disordered stretch occupies residues 76–103; the sequence is TLPANPPPASTNRQSGRQPTPLSPPLRN. Over residues 85–95 the composition is skewed to polar residues; that stretch reads STNRQSGRQPT. A pre-S2 region spans residues 109-163; it reads MQWNSTTFHQTLQDPRVRGLYFPAGGSSSGTVNPVLTTASPLSSIFSRIGDPALN. Residues 171–191 form a helical membrane-spanning segment; that stretch reads FLGPLLVLQAGFFLLTRILTI. The Intravirion; in external conformation portion of the chain corresponds to 192 to 242; it reads PQSLDSWWTSLNFLGGTTVCLGQNSQSPTSNHSPTSCPPTCPGYRWMCLRR. Residues 243–263 form a helical membrane-spanning segment; it reads FIIFLFILLLCLIFLLVLLDY. Over 264-337 the chain is Virion surface; it reads QGMLPVCPLI…WASARFSWLS (74 aa). Residue Asn-309 is glycosylated (N-linked (GlcNAc...) asparagine; by host). The helical transmembrane segment at 338–358 threads the bilayer; the sequence is LLVPFVQWFVGLSPTVWLSVI. The Intravirion portion of the chain corresponds to 359–364; the sequence is WMMWYW. Residues 365–387 form a helical membrane-spanning segment; sequence GPSLYSILSPFLPLLPIFFCLWV. The Virion surface segment spans residues 388–389; sequence YI.

The protein belongs to the orthohepadnavirus major surface antigen family. As to quaternary structure, in its internal form (Li-HBsAg), interacts with the capsid protein and with the isoform S. Interacts with host chaperone CANX. Associates with host chaperone CANX through its pre-S2 N glycan; this association may be essential for isoform M proper secretion. In terms of assembly, interacts with isoform L. Interacts with the antigens of satellite virus HDV (HDVAgs); this interaction is required for encapsidation of HDV genomic RNA. Post-translationally, isoform M is N-terminally acetylated by host at a ratio of 90%, and N-glycosylated by host at the pre-S2 region. Myristoylated.

Its subcellular location is the virion membrane. Its function is as follows. The large envelope protein exists in two topological conformations, one which is termed 'external' or Le-HBsAg and the other 'internal' or Li-HBsAg. In its external conformation the protein attaches the virus to cell receptors and thereby initiating infection. This interaction determines the species specificity and liver tropism. This attachment induces virion internalization predominantly through caveolin-mediated endocytosis. The large envelope protein also assures fusion between virion membrane and endosomal membrane. In its internal conformation the protein plays a role in virion morphogenesis and mediates the contact with the nucleocapsid like a matrix protein. The middle envelope protein plays an important role in the budding of the virion. It is involved in the induction of budding in a nucleocapsid independent way. In this process the majority of envelope proteins bud to form subviral lipoprotein particles of 22 nm of diameter that do not contain a nucleocapsid. This is Large envelope protein from Homo sapiens (Human).